A 63-amino-acid polypeptide reads, in one-letter code: Large ribosomal subunit protein uL29 (63 aa).

Belongs to the universal ribosomal protein uL29 family.

This Vibrio parahaemolyticus serotype O3:K6 (strain RIMD 2210633) protein is Large ribosomal subunit protein uL29.